The chain runs to 136 residues: Small ribosomal subunit protein eS8 (136 aa).

This sequence belongs to the eukaryotic ribosomal protein eS8 family. As to quaternary structure, part of the 30S ribosomal subunit.

The sequence is that of Small ribosomal subunit protein eS8 (rps8e) from Aeropyrum pernix (strain ATCC 700893 / DSM 11879 / JCM 9820 / NBRC 100138 / K1).